Reading from the N-terminus, the 861-residue chain is Probable linoleate 9S-lipoxygenase 8 (861 aa).

The region spanning 33–160 (FTDLASSLTG…NYKSDRIFFA (128 aa)) is the PLAT domain. The 699-residue stretch at 163-861 (PYLPSETPEL…GKGIPNSVSI (699 aa)) folds into the Lipoxygenase domain. A disordered region spans residues 220–245 (TLGGSAEYPYPRRGRTGRPPTRTDPK). Fe cation is bound by residues His-522, His-527, His-713, Asn-717, and Ile-861.

It belongs to the lipoxygenase family. As to quaternary structure, monomer. Fe cation is required as a cofactor.

Its subcellular location is the cytoplasm. The catalysed reaction is (9Z,12Z)-octadecadienoate + O2 = (9S)-hydroperoxy-(10E,12Z)-octadecadienoate. The protein operates within lipid metabolism; oxylipin biosynthesis. In terms of biological role, plant lipoxygenases may be involved in a number of diverse aspects of plant physiology including growth and development, pest resistance, and senescence or responses to wounding. Catalyzes the hydroperoxidation of lipids containing a cis,cis-1,4-pentadiene structure. This chain is Probable linoleate 9S-lipoxygenase 8 (LOX1.8), found in Solanum tuberosum (Potato).